A 1722-amino-acid polypeptide reads, in one-letter code: Signal-induced proliferation-associated 1-like protein 2 (1722 aa).

Disordered regions lie at residues Met-1–Gln-29 and Met-45–Pro-73. Residues Glu-57–Ala-66 are compositionally biased toward gly residues. Phosphoserine is present on residues Ser-149, Ser-380, and Ser-384. Positions Ala-362 to Asn-404 are disordered. The span at Ser-384–Ser-403 shows a compositional bias: basic and acidic residues. One can recognise a Rap-GAP domain in the interval Leu-596–Leu-813. Positions Glu-951–Glu-1027 constitute a PDZ domain. Ser-1030 is subject to Phosphoserine. Disordered stretches follow at residues His-1068–Asp-1172, Glu-1197–Gly-1246, and Ala-1328–Gly-1361. 2 stretches are compositionally biased toward low complexity: residues Leu-1091–Ala-1103 and Ser-1120–Pro-1131. Positions Glu-1197–Asp-1218 are enriched in basic and acidic residues. Over residues Ser-1220–Asn-1237 the composition is skewed to low complexity. Ser-1245 carries the phosphoserine modification. Positions Ala-1328–His-1355 are enriched in low complexity. Residues Ser-1461, Ser-1472, Ser-1478, Ser-1488, Ser-1549, Ser-1552, and Ser-1591 each carry the phosphoserine modification. Positions Ser-1652–Glu-1712 form a coiled coil.

The sequence is that of Signal-induced proliferation-associated 1-like protein 2 (Sipa1l2) from Rattus norvegicus (Rat).